The primary structure comprises 160 residues: MKIAVIQGPNLNMLGVREQQIYGSMKLEQIHAQMRDFAAQSGLEIEFFQSNLEGEIVDKIQECYGDVNGIIINAAAYTHTSIAIRDAISAVNLPTVEVHISNINRREEFRKQNMIAPVCTSSIVGFGPFGYHLAMVGMIQILNEIKAVQEMQKQQAPQAE.

Tyrosine 22 acts as the Proton acceptor in catalysis. Positions 73, 79, and 86 each coordinate substrate. The active-site Proton donor is the histidine 99. Residues 100–101 (IS) and arginine 110 contribute to the substrate site.

The protein belongs to the type-II 3-dehydroquinase family. Homododecamer.

It carries out the reaction 3-dehydroquinate = 3-dehydroshikimate + H2O. The protein operates within metabolic intermediate biosynthesis; chorismate biosynthesis; chorismate from D-erythrose 4-phosphate and phosphoenolpyruvate: step 3/7. In terms of biological role, catalyzes a trans-dehydration via an enolate intermediate. This Sulfurimonas denitrificans (strain ATCC 33889 / DSM 1251) (Thiomicrospira denitrificans (strain ATCC 33889 / DSM 1251)) protein is 3-dehydroquinate dehydratase.